Here is a 111-residue protein sequence, read N- to C-terminus: Nucleoid-associated protein TTE0040 (111 aa).

It belongs to the YbaB/EbfC family. In terms of assembly, homodimer.

It is found in the cytoplasm. The protein resides in the nucleoid. In terms of biological role, binds to DNA and alters its conformation. May be involved in regulation of gene expression, nucleoid organization and DNA protection. The sequence is that of Nucleoid-associated protein TTE0040 from Caldanaerobacter subterraneus subsp. tengcongensis (strain DSM 15242 / JCM 11007 / NBRC 100824 / MB4) (Thermoanaerobacter tengcongensis).